The chain runs to 533 residues: Glucose-6-phosphate isomerase (533 aa).

Glu-322 functions as the Proton donor in the catalytic mechanism. Residues His-351 and Lys-455 contribute to the active site.

The protein belongs to the GPI family.

Its subcellular location is the cytoplasm. It carries out the reaction alpha-D-glucose 6-phosphate = beta-D-fructose 6-phosphate. It participates in carbohydrate biosynthesis; gluconeogenesis. Its pathway is carbohydrate degradation; glycolysis; D-glyceraldehyde 3-phosphate and glycerone phosphate from D-glucose: step 2/4. Its function is as follows. Catalyzes the reversible isomerization of glucose-6-phosphate to fructose-6-phosphate. This Desulfitobacterium hafniense (strain DSM 10664 / DCB-2) protein is Glucose-6-phosphate isomerase.